Reading from the N-terminus, the 98-residue chain is Acylphosphatase (98 aa).

The 87-residue stretch at 12–98 (TYYVRVRGVV…DKRFERFQQH (87 aa)) folds into the Acylphosphatase-like domain. Active-site residues include arginine 27 and asparagine 45.

The protein belongs to the acylphosphatase family.

The catalysed reaction is an acyl phosphate + H2O = a carboxylate + phosphate + H(+). This chain is Acylphosphatase (acyP), found in Burkholderia thailandensis (strain ATCC 700388 / DSM 13276 / CCUG 48851 / CIP 106301 / E264).